A 203-amino-acid chain; its full sequence is Small ribosomal subunit protein uS4c (203 aa).

The region spanning 91-159 (MRLDNIIFRL…ISKNIEFYQK (69 aa)) is the S4 RNA-binding domain.

Belongs to the universal ribosomal protein uS4 family. As to quaternary structure, part of the 30S ribosomal subunit. Contacts protein S5. The interaction surface between S4 and S5 is involved in control of translational fidelity.

Its subcellular location is the plastid. The protein localises to the chloroplast. Functionally, one of the primary rRNA binding proteins, it binds directly to 16S rRNA where it nucleates assembly of the body of the 30S subunit. Its function is as follows. With S5 and S12 plays an important role in translational accuracy. The polypeptide is Small ribosomal subunit protein uS4c (rps4) (Lopidium concinnum (Moss)).